Here is a 129-residue protein sequence, read N- to C-terminus: Large ribosomal subunit protein uL22 (129 aa).

This sequence belongs to the universal ribosomal protein uL22 family. Part of the 50S ribosomal subunit.

In terms of biological role, this protein binds specifically to 23S rRNA; its binding is stimulated by other ribosomal proteins, e.g. L4, L17, and L20. It is important during the early stages of 50S assembly. It makes multiple contacts with different domains of the 23S rRNA in the assembled 50S subunit and ribosome. Its function is as follows. The globular domain of the protein is located near the polypeptide exit tunnel on the outside of the subunit, while an extended beta-hairpin is found that lines the wall of the exit tunnel in the center of the 70S ribosome. The chain is Large ribosomal subunit protein uL22 from Brucella abortus (strain 2308).